The sequence spans 390 residues: Aspartate beta-hydroxylase domain-containing protein 1 (390 aa).

The interval 1 to 54 is disordered; it reads MKEGRGSFSVERGPRKERETAQSGMWKGNSPAGSQGAAMEGTGGELGGQGNWGP. Topologically, residues 1–72 are cytoplasmic; sequence MKEGRGSFSV…RASLIMLPWP (72 aa). The span at 41–51 shows a compositional bias: gly residues; it reads GTGGELGGQGN. The helical transmembrane segment at 73-95 threads the bilayer; that stretch reads LPLASSALTLLFGALTSLFLWYC. The Lumenal portion of the chain corresponds to 96 to 390; sequence YRLGSQDMQA…ALDFVFAPDP (295 aa). The tract at residues 116 to 143 is disordered; sequence RGGPVGCSEAGGPSPGGPGDPGEGPRTE. Positions 128–137 are enriched in gly residues; the sequence is PSPGGPGDPG. Serine 129 carries the post-translational modification Phosphoserine.

The protein belongs to the aspartyl/asparaginyl beta-hydroxylase family.

The protein resides in the membrane. This chain is Aspartate beta-hydroxylase domain-containing protein 1 (ASPHD1), found in Homo sapiens (Human).